Here is a 243-residue protein sequence, read N- to C-terminus: UPF0702 transmembrane protein YkjA (243 aa).

3 consecutive transmembrane segments (helical) span residues 3 to 23, 34 to 54, and 58 to 78; these read WMVWVFLLKPVIVFSIAYILF, MNNFDLLLTFAIGTIISEPIL, and LPMSIYYAGAFLVLYLIMSKL.

Belongs to the UPF0702 family.

Its subcellular location is the cell membrane. The chain is UPF0702 transmembrane protein YkjA (ykjA) from Bacillus subtilis (strain 168).